Reading from the N-terminus, the 142-residue chain is Transcriptional regulator MraZ (142 aa).

2 consecutive SpoVT-AbrB domains span residues 5 to 47 and 76 to 119; these read RFTH…PMDS and ATVV…SPEN.

Belongs to the MraZ family. In terms of assembly, forms oligomers.

Its subcellular location is the cytoplasm. The protein localises to the nucleoid. This chain is Transcriptional regulator MraZ, found in Thermomicrobium roseum (strain ATCC 27502 / DSM 5159 / P-2).